The following is a 356-amino-acid chain: tRNA N6-adenosine threonylcarbamoyltransferase (356 aa).

Positions 114 and 118 each coordinate Fe cation. Substrate-binding positions include 136–140 (LVSGG), Asp-169, Gly-182, and Asn-280. A Fe cation-binding site is contributed by Asp-308. Residues 333–356 (ARPRWPLDNSQPALLGSGKKGAKA) form a disordered region.

Belongs to the KAE1 / TsaD family. Fe(2+) serves as cofactor.

The protein resides in the cytoplasm. The catalysed reaction is L-threonylcarbamoyladenylate + adenosine(37) in tRNA = N(6)-L-threonylcarbamoyladenosine(37) in tRNA + AMP + H(+). In terms of biological role, required for the formation of a threonylcarbamoyl group on adenosine at position 37 (t(6)A37) in tRNAs that read codons beginning with adenine. Is involved in the transfer of the threonylcarbamoyl moiety of threonylcarbamoyl-AMP (TC-AMP) to the N6 group of A37, together with TsaE and TsaB. TsaD likely plays a direct catalytic role in this reaction. This Dinoroseobacter shibae (strain DSM 16493 / NCIMB 14021 / DFL 12) protein is tRNA N6-adenosine threonylcarbamoyltransferase.